The following is a 473-amino-acid chain: Cephalotoxin-like protein (473 aa).

Positions 1-21 are cleaved as a signal peptide; the sequence is RWLGWQKFCWISCLFSSISSG. Coiled-coil stretches lie at residues 40–60 and 116–147; these read AINA…EALK and LINE…ADTA.

In terms of tissue distribution, component of the acid-insoluble and acid-soluble organic matrix of the aragonitic skeleton (at protein level).

The protein localises to the secreted. This is Cephalotoxin-like protein from Acropora millepora (Staghorn coral).